Here is a 424-residue protein sequence, read N- to C-terminus: UPF0597 protein Ssed_2537 (424 aa).

Belongs to the UPF0597 family.

This chain is UPF0597 protein Ssed_2537, found in Shewanella sediminis (strain HAW-EB3).